We begin with the raw amino-acid sequence, 141 residues long: Hemoglobin subunit alpha (141 aa).

One can recognise a Globin domain in the interval 1–141 (VLSPADKTNV…VSTVLTSKYR (141 aa)). Ser3 is subject to Phosphoserine. Lys7 carries the N6-succinyllysine modification. The residue at position 8 (Thr8) is a Phosphothreonine. Lys11 is subject to N6-succinyllysine. An N6-acetyllysine; alternate modification is found at Lys16. At Lys16 the chain carries N6-succinyllysine; alternate. Residue Tyr24 is modified to Phosphotyrosine. Ser35 bears the Phosphoserine mark. Lys40 carries the post-translational modification N6-succinyllysine. Residue Ser49 is modified to Phosphoserine. O2 is bound at residue His58. His87 contacts heme b. The residue at position 102 (Ser102) is a Phosphoserine. A Phosphothreonine modification is found at Thr108. Residues Ser124 and Ser131 each carry the phosphoserine modification. Residues Thr134 and Thr137 each carry the phosphothreonine modification. The residue at position 138 (Ser138) is a Phosphoserine.

The protein belongs to the globin family. As to quaternary structure, heterotetramer of two alpha chains and two beta chains. Red blood cells.

In terms of biological role, involved in oxygen transport from the lung to the various peripheral tissues. Its function is as follows. Hemopressin acts as an antagonist peptide of the cannabinoid receptor CNR1. Hemopressin-binding efficiently blocks cannabinoid receptor CNR1 and subsequent signaling. This chain is Hemoglobin subunit alpha (HBA), found in Loris tardigradus (Slender loris).